Consider the following 380-residue polypeptide: Mitogen-activated protein kinase mpkC (380 aa).

Residues 20–300 (YVNLQPIGMG…AQDALRHPYL (281 aa)) form the Protein kinase domain. ATP-binding positions include 26 to 34 (IGMGSFGLV) and lysine 49. Catalysis depends on aspartate 141, which acts as the Proton acceptor. The residue at position 171 (threonine 171) is a Phosphothreonine. The short motif at 171 to 173 (TGY) is the TXY element. At tyrosine 173 the chain carries Phosphotyrosine.

It belongs to the protein kinase superfamily. Ser/Thr protein kinase family. MAP kinase subfamily. HOG1 sub-subfamily. The cofactor is Mg(2+). Post-translationally, dually phosphorylated on Thr-171 and Tyr-173, which activates the enzyme.

It catalyses the reaction L-seryl-[protein] + ATP = O-phospho-L-seryl-[protein] + ADP + H(+). The enzyme catalyses L-threonyl-[protein] + ATP = O-phospho-L-threonyl-[protein] + ADP + H(+). Activated by tyrosine and threonine phosphorylation. Its function is as follows. Mitogen-activated protein kinase required for growth on media where sorbitol or mannitol is the sole carbon source. This is Mitogen-activated protein kinase mpkC (mpkC) from Aspergillus clavatus (strain ATCC 1007 / CBS 513.65 / DSM 816 / NCTC 3887 / NRRL 1 / QM 1276 / 107).